A 370-amino-acid chain; its full sequence is ADP-ribosylhydrolase ARH3 (370 aa).

Mg(2+) is bound by residues glutamate 35, aspartate 66, and aspartate 67. Aspartate 66 serves as a coordination point for substrate. Substrate-binding positions include 135–141 (RGSFGNG), histidine 171, leucine 225, and isoleucine 261. Mg(2+) contacts are provided by aspartate 304, aspartate 306, and threonine 307.

This sequence belongs to the ADP-ribosylglycohydrolase family. As to quaternary structure, monomer. It depends on Mg(2+) as a cofactor.

The protein resides in the nucleus. It localises to the cytoplasm. Its subcellular location is the chromosome. It is found in the mitochondrion matrix. The enzyme catalyses [(1''-&gt;2')-ADP-alpha-D-ribose](n) + H2O = [(1''-&gt;2')-ADP-alpha-D-ribose](n-1) + ADP-D-ribose. It catalyses the reaction 1''-O-acetyl-ADP-alpha-D-ribose + H2O = ADP-D-ribose + acetate + H(+). It carries out the reaction O-(ADP-D-ribosyl)-L-seryl-[protein] + H2O = ADP-D-ribose + L-seryl-[protein]. The catalysed reaction is alpha-NAD(+) + H2O = ADP-D-ribose + nicotinamide + H(+). Its activity is regulated as follows. The protein undergoes a dramatic conformational switch from closed to open states upon substrate-binding, which enables specific substrate recognition for the 1''-O-linkage. The glutamate flap (Glu-35) blocks substrate entrance to Mg(2+) in the unliganded closed state. In presence of substrate, Glu-35 is ejected from the active site: this closed-to-open transition significantly widens the substrate-binding channel and precisely positions the scissile 1''-O-linkage for cleavage while securing tightly 2'- and 3'-hydroxyls of ADP-ribose. Functionally, ADP-ribosylhydrolase that preferentially hydrolyzes the scissile alpha-O-linkage attached to the anomeric C1'' position of ADP-ribose and acts on different substrates, such as proteins ADP-ribosylated on serine and threonine, free poly(ADP-ribose) and O-acetyl-ADP-D-ribose. Specifically acts as a serine mono-ADP-ribosylhydrolase by mediating the removal of mono-ADP-ribose attached to serine residues on proteins, thereby playing a key role in DNA damage response. Serine ADP-ribosylation of proteins constitutes the primary form of ADP-ribosylation of proteins in response to DNA damage. Does not hydrolyze ADP-ribosyl-arginine, -cysteine, -diphthamide, or -asparagine bonds. Also able to degrade protein free poly(ADP-ribose), which is synthesized in response to DNA damage: free poly(ADP-ribose) acts as a potent cell death signal and its degradation by ADPRHL2 protects cells from poly(ADP-ribose)-dependent cell death, a process named parthanatos. Also hydrolyzes free poly(ADP-ribose) in mitochondria. Specifically digests O-acetyl-ADP-D-ribose, a product of deacetylation reactions catalyzed by sirtuins. Specifically degrades 1''-O-acetyl-ADP-D-ribose isomer, rather than 2''-O-acetyl-ADP-D-ribose or 3''-O-acetyl-ADP-D-ribose isomers. The polypeptide is ADP-ribosylhydrolase ARH3 (adprs) (Danio rerio (Zebrafish)).